We begin with the raw amino-acid sequence, 109 residues long: Latartoxin-2a (109 aa).

A signal peptide spans 1 to 19 (MKVLVIIALCLVAFQSALS). A propeptide spans 20-37 (KKIENFESYIEDLKSEAR) (removed in mature form). The short motif at 34-37 (SEAR) is the Processing quadruplet motif element. Intrachain disulfides connect C39–C56, C46–C67, C55–C81, C69–C79, and C72–C93. V108 carries the post-translational modification Valine amide.

This sequence belongs to the neurotoxin 19 (CSTX) family. 11 (latartoxin) subfamily. Contains 5 disulfide bonds. Post-translationally, cleavage of the propeptide depends on the processing quadruplet motif (XXXR, with at least one of X being E). In terms of tissue distribution, expressed by the venom gland.

It is found in the secreted. Insect toxin. Causes paralysis in larvae of C.vicina by depolarizing membranes at the neuromuscular junction. This is Latartoxin-2a from Lachesana tarabaevi (Spider).